The following is a 373-amino-acid chain: uncharacterized protein (373 aa).

In terms of domain architecture, CP-type G spans 14–168 (KKIVNKIIDE…LMDTPGVLEM (155 aa)). 117–124 (GYPNVGKS) provides a ligand contact to GTP.

It belongs to the TRAFAC class YlqF/YawG GTPase family.

This is an uncharacterized protein from Methanocaldococcus jannaschii (strain ATCC 43067 / DSM 2661 / JAL-1 / JCM 10045 / NBRC 100440) (Methanococcus jannaschii).